A 288-amino-acid polypeptide reads, in one-letter code: Co-chaperone protein DjlA (288 aa).

Residues 1-6 lie on the Periplasmic side of the membrane; it reads MNFIGK. Residues 7-30 traverse the membrane as a helical segment; it reads ILGFIIGYRFGGLFGGIAGLILGH. Topologically, residues 31–288 are cytoplasmic; sequence IADKKLYELG…DLICKVKGWK (258 aa). Residues 222–288 form the J domain; it reads DAYKVLGVNA…DLICKVKGWK (67 aa).

In terms of assembly, homodimer.

It is found in the cell inner membrane. Regulatory DnaK co-chaperone. Direct interaction between DnaK and DjlA is needed for the induction of the wcaABCDE operon, involved in the synthesis of a colanic acid polysaccharide capsule, possibly through activation of the RcsB/RcsC phosphotransfer signaling pathway. The colanic acid capsule may help the bacterium survive conditions outside the host. The polypeptide is Co-chaperone protein DjlA (Mannheimia succiniciproducens (strain KCTC 0769BP / MBEL55E)).